Here is a 33-residue protein sequence, read N- to C-terminus: Photosystem II reaction center protein T (33 aa).

A helical transmembrane segment spans residues alanine 3–phenylalanine 23.

Belongs to the PsbT family. As to quaternary structure, PSII is composed of 1 copy each of membrane proteins PsbA, PsbB, PsbC, PsbD, PsbE, PsbF, PsbH, PsbI, PsbJ, PsbK, PsbL, PsbM, PsbT, PsbY, PsbZ, Psb30/Ycf12, at least 3 peripheral proteins of the oxygen-evolving complex and a large number of cofactors. It forms dimeric complexes.

Its subcellular location is the plastid. The protein localises to the chloroplast thylakoid membrane. Its function is as follows. Found at the monomer-monomer interface of the photosystem II (PS II) dimer, plays a role in assembly and dimerization of PSII. PSII is a light-driven water plastoquinone oxidoreductase, using light energy to abstract electrons from H(2)O, generating a proton gradient subsequently used for ATP formation. The protein is Photosystem II reaction center protein T of Helianthus annuus (Common sunflower).